The primary structure comprises 451 residues: Proton-coupled amino acid transporter-like protein acs (451 aa).

Over 1-48 (MNDDIKTVTVYPTTLELTTPTKSANGSNDDYDPHQHRELKNPTTNFQT) the chain is Cytoplasmic. Residues 49–69 (FAHFLKASVGTGVLAMPSAFA) form a helical membrane-spanning segment. Over 70 to 80 (HAGYVNGTLLT) the chain is Extracellular. Asn-75 is a glycosylation site (N-linked (GlcNAc...) asparagine). The chain crosses the membrane as a helical span at residues 81–101 (LIIGSLALYCLHILIKCMYIL). At 102–136 (CKRQRVPYVSFSQAMNLGLKQGPPWLRCLAPIAVP) the chain is on the cytoplasmic side. The chain crosses the membrane as a helical span at residues 137-157 (FVDGFLAFYHFGICCVYVVFI). The Extracellular portion of the chain corresponds to 158-167 (AESIKQLVDE). Residues 168–188 (YLVVWDVRIHMCIIIVPLLLI) traverse the membrane as a helical segment. Residues 189–199 (YSIKNLKLLAP) are Cytoplasmic-facing. The chain crosses the membrane as a helical span at residues 200–220 (FSSAANLLLLVGFGIILYYIF). The Extracellular portion of the chain corresponds to 221 to 237 (EELPPLSERDPFVAAGK). The chain crosses the membrane as a helical span at residues 238-258 (LPTFFGTVLFALEAVGVILAI). The Cytoplasmic segment spans residues 259 to 272 (EENMATPKSFVGPC). A helical transmembrane segment spans residues 273–293 (GILNSGMSIVLGLYVLLGFFG). The Extracellular portion of the chain corresponds to 294–320 (YWKYGNESEGSITLNIPQSEIPAQVVK). An N-linked (GlcNAc...) asparagine glycan is attached at Asn-299. A helical membrane pass occupies residues 321-341 (VFFAITTWISYALQGYVTAHI). At 342–357 (LWDKYLAKRFKETRQT) the chain is on the cytoplasmic side. Residues 358-378 (FYELIFRAIIVLLTFGCAVAI) form a helical membrane-spanning segment. The Extracellular segment spans residues 379–382 (PDLS). A helical membrane pass occupies residues 383 to 403 (VFLSLVGSFCLSILGLIFPVL). Residues 404–420 (LQICVQYTEGYGPFRIK) are Cytoplasmic-facing. A helical membrane pass occupies residues 421-441 (LIINLLLLCFGIFGGVVGTYV). The Extracellular segment spans residues 442–451 (SILDIIAVYK).

The protein belongs to the amino acid/polyamine transporter 2 family. As to expression, expressed in the proximal and distal regions of the midgut; expressed in enterocytes and progenitor cells. Expression increases in response to intestinal bacterial infection and spreads further into the midgut, eventually covering the entire midgut.

The protein resides in the cell membrane. Its subcellular location is the late endosome membrane. It localises to the lysosome membrane. It is found in the basal cell membrane. In terms of biological role, amino acid transporter which has pH-dependent electrogenic transport activity for alanine, glycine and proline. Plays a role in positive regulation of growth by directly or indirectly modulating the effects of the TOR signaling pathway. Required in enterocytes for the efficient recovery of gut epithelium following the cytoplasmic purge response to bacterial infection. Acts cell-autonomously to promote the retrograde transport of amino acids into the intestinal epithelium. Acts non-cell-autonomously through the insulin signaling pathway to stimulate Myc expression and the release of amino acids from nutrient stores into the hemolymph. The polypeptide is Proton-coupled amino acid transporter-like protein acs (Drosophila melanogaster (Fruit fly)).